The primary structure comprises 338 residues: Glyceraldehyde-3-phosphate dehydrogenase (338 aa).

NAD(+) is bound by residues Thr11–Ile12 and Gly109. Position 138–140 (Ser138–Asn140) interacts with D-glyceraldehyde 3-phosphate. Cys139 functions as the Nucleophile in the catalytic mechanism. Arg167 serves as a coordination point for NAD(+). D-glyceraldehyde 3-phosphate is bound by residues Thr169 and His192–Ala193. Gln299 is an NAD(+) binding site.

Belongs to the glyceraldehyde-3-phosphate dehydrogenase family. As to quaternary structure, homotetramer.

Its subcellular location is the cytoplasm. It carries out the reaction D-glyceraldehyde 3-phosphate + phosphate + NADP(+) = (2R)-3-phospho-glyceroyl phosphate + NADPH + H(+). The catalysed reaction is D-glyceraldehyde 3-phosphate + phosphate + NAD(+) = (2R)-3-phospho-glyceroyl phosphate + NADH + H(+). It participates in carbohydrate degradation; glycolysis; pyruvate from D-glyceraldehyde 3-phosphate: step 1/5. The protein is Glyceraldehyde-3-phosphate dehydrogenase of Thermoplasma volcanium (strain ATCC 51530 / DSM 4299 / JCM 9571 / NBRC 15438 / GSS1).